Consider the following 487-residue polypeptide: 2-aminomuconic semialdehyde dehydrogenase (487 aa).

231–236 (GSQPTA) contacts NAD(+). Glu-253 functions as the Proton acceptor in the catalytic mechanism. Cys-287 acts as the Nucleophile in catalysis. Ser-362 is subject to Phosphoserine.

It belongs to the aldehyde dehydrogenase family. In terms of tissue distribution, detected in hepatocytes and in proximal and distal convoluted tubules in kidney cortex (at protein level). Highly expressed in adult liver and in kidney cortex. First detected in embryonic liver after 15 days of development.

It is found in the cytoplasm. The enzyme catalyses 2-aminomuconate 6-semialdehyde + NAD(+) + H2O = (2Z,4E)-2-aminomuconate + NADH + 2 H(+). It functions in the pathway amino-acid degradation; L-kynurenine degradation. Functionally, catalyzes the NAD-dependent oxidation of 2-aminomuconic semialdehyde of the kynurenine metabolic pathway in L-tryptophan degradation. The chain is 2-aminomuconic semialdehyde dehydrogenase (Aldh8a1) from Mus musculus (Mouse).